Here is a 407-residue protein sequence, read N- to C-terminus: UDP-N-acetylglucosamine--N-acetylmuramyl-(pentapeptide) pyrophosphoryl-undecaprenol N-acetylglucosamine transferase (407 aa).

The segment at 1-21 (MNNSVREPTRGRRGSPPVADA) is disordered. UDP-N-acetyl-alpha-D-glucosamine-binding positions include 38–40 (TAG), N157, S228, and Q324.

It belongs to the glycosyltransferase 28 family. MurG subfamily.

It is found in the cell membrane. The catalysed reaction is di-trans,octa-cis-undecaprenyl diphospho-N-acetyl-alpha-D-muramoyl-L-alanyl-D-glutamyl-meso-2,6-diaminopimeloyl-D-alanyl-D-alanine + UDP-N-acetyl-alpha-D-glucosamine = di-trans,octa-cis-undecaprenyl diphospho-[N-acetyl-alpha-D-glucosaminyl-(1-&gt;4)]-N-acetyl-alpha-D-muramoyl-L-alanyl-D-glutamyl-meso-2,6-diaminopimeloyl-D-alanyl-D-alanine + UDP + H(+). The protein operates within cell wall biogenesis; peptidoglycan biosynthesis. Its function is as follows. Cell wall formation. Catalyzes the transfer of a GlcNAc subunit on undecaprenyl-pyrophosphoryl-MurNAc-pentapeptide (lipid intermediate I) to form undecaprenyl-pyrophosphoryl-MurNAc-(pentapeptide)GlcNAc (lipid intermediate II). The chain is UDP-N-acetylglucosamine--N-acetylmuramyl-(pentapeptide) pyrophosphoryl-undecaprenol N-acetylglucosamine transferase from Mycobacterium leprae (strain TN).